Reading from the N-terminus, the 444-residue chain is Tol-Pal system protein TolB (444 aa).

The N-terminal stretch at 1-19 (MRNIIYFILSLLFSVTSYA) is a signal peptide.

Belongs to the TolB family. As to quaternary structure, the Tol-Pal system is composed of five core proteins: the inner membrane proteins TolA, TolQ and TolR, the periplasmic protein TolB and the outer membrane protein Pal. They form a network linking the inner and outer membranes and the peptidoglycan layer.

The protein localises to the periplasm. In terms of biological role, part of the Tol-Pal system, which plays a role in outer membrane invagination during cell division and is important for maintaining outer membrane integrity. This chain is Tol-Pal system protein TolB, found in Rickettsia peacockii (strain Rustic).